We begin with the raw amino-acid sequence, 415 residues long: Serine hydroxymethyltransferase (415 aa).

Residues leucine 120 and 124-126 (GHL) contribute to the (6S)-5,6,7,8-tetrahydrofolate site. The residue at position 229 (lysine 229) is an N6-(pyridoxal phosphate)lysine.

It belongs to the SHMT family. As to quaternary structure, homodimer. The cofactor is pyridoxal 5'-phosphate.

It is found in the cytoplasm. It carries out the reaction (6R)-5,10-methylene-5,6,7,8-tetrahydrofolate + glycine + H2O = (6S)-5,6,7,8-tetrahydrofolate + L-serine. The protein operates within one-carbon metabolism; tetrahydrofolate interconversion. Its pathway is amino-acid biosynthesis; glycine biosynthesis; glycine from L-serine: step 1/1. Catalyzes the reversible interconversion of serine and glycine with tetrahydrofolate (THF) serving as the one-carbon carrier. This reaction serves as the major source of one-carbon groups required for the biosynthesis of purines, thymidylate, methionine, and other important biomolecules. Also exhibits THF-independent aldolase activity toward beta-hydroxyamino acids, producing glycine and aldehydes, via a retro-aldol mechanism. This chain is Serine hydroxymethyltransferase, found in Caldicellulosiruptor bescii (strain ATCC BAA-1888 / DSM 6725 / KCTC 15123 / Z-1320) (Anaerocellum thermophilum).